Consider the following 252-residue polypeptide: Triosephosphate isomerase (252 aa).

Residue 10-12 (NWK) coordinates substrate. The Electrophile role is filled by histidine 96. Glutamate 168 acts as the Proton acceptor in catalysis. Substrate-binding positions include glycine 174, serine 214, and 235–236 (GG).

It belongs to the triosephosphate isomerase family. Homodimer.

The protein resides in the cytoplasm. The catalysed reaction is D-glyceraldehyde 3-phosphate = dihydroxyacetone phosphate. The protein operates within carbohydrate biosynthesis; gluconeogenesis. It functions in the pathway carbohydrate degradation; glycolysis; D-glyceraldehyde 3-phosphate from glycerone phosphate: step 1/1. Involved in the gluconeogenesis. Catalyzes stereospecifically the conversion of dihydroxyacetone phosphate (DHAP) to D-glyceraldehyde-3-phosphate (G3P). The polypeptide is Triosephosphate isomerase (Streptococcus pyogenes serotype M5 (strain Manfredo)).